A 323-amino-acid chain; its full sequence is o-succinylbenzoate synthase (323 aa).

Lys-134 acts as the Proton donor in catalysis. Mg(2+) contacts are provided by Asp-162, Glu-191, and Asp-214. The active-site Proton acceptor is the Lys-236.

This sequence belongs to the mandelate racemase/muconate lactonizing enzyme family. MenC type 1 subfamily. The cofactor is a divalent metal cation.

It carries out the reaction (1R,6R)-6-hydroxy-2-succinyl-cyclohexa-2,4-diene-1-carboxylate = 2-succinylbenzoate + H2O. It participates in quinol/quinone metabolism; 1,4-dihydroxy-2-naphthoate biosynthesis; 1,4-dihydroxy-2-naphthoate from chorismate: step 4/7. Its pathway is quinol/quinone metabolism; menaquinone biosynthesis. In terms of biological role, converts 2-succinyl-6-hydroxy-2,4-cyclohexadiene-1-carboxylate (SHCHC) to 2-succinylbenzoate (OSB). The sequence is that of o-succinylbenzoate synthase from Yersinia enterocolitica serotype O:8 / biotype 1B (strain NCTC 13174 / 8081).